The chain runs to 1047 residues: Formin-like protein 3 (1047 aa).

The N-myristoyl glycine moiety is linked to residue glycine 2. One can recognise a GBD/FH3 domain in the interval valine 22–glutamate 462. The disordered stretch occupies residues alanine 520–proline 561. Over residues alanine 527–proline 546 the composition is skewed to pro residues. Positions isoleucine 580–alanine 970 constitute an FH2 domain. One can recognise a DAD domain in the interval aspartate 1000–cysteine 1037.

Belongs to the formin homology family.

The protein localises to the cytoplasm. Its subcellular location is the cell membrane. Required for developmental angiogenesis, but not for vasculogenesis. The sequence is that of Formin-like protein 3 (fmnl3) from Danio rerio (Zebrafish).